Reading from the N-terminus, the 156-residue chain is Methylated-DNA--protein-cysteine methyltransferase (156 aa).

Residue Cys120 is the Nucleophile; methyl group acceptor of the active site.

It belongs to the MGMT family.

It localises to the cytoplasm. The enzyme catalyses a 6-O-methyl-2'-deoxyguanosine in DNA + L-cysteinyl-[protein] = S-methyl-L-cysteinyl-[protein] + a 2'-deoxyguanosine in DNA. It carries out the reaction a 4-O-methyl-thymidine in DNA + L-cysteinyl-[protein] = a thymidine in DNA + S-methyl-L-cysteinyl-[protein]. In terms of biological role, involved in the cellular defense against the biological effects of O6-methylguanine (O6-MeG) and O4-methylthymine (O4-MeT) in DNA. Repairs the methylated nucleobase in DNA by stoichiometrically transferring the methyl group to a cysteine residue in the enzyme. This is a suicide reaction: the enzyme is irreversibly inactivated. The polypeptide is Methylated-DNA--protein-cysteine methyltransferase (Sulfurisphaera tokodaii (strain DSM 16993 / JCM 10545 / NBRC 100140 / 7) (Sulfolobus tokodaii)).